We begin with the raw amino-acid sequence, 520 residues long: MVRGIIRIASLASVSLSSSGFFLYGTGYWDPSDFGVVRIGRAVLTTAAITWDYFTKLRHVEAGTEEYENIKSQVHLRSAHRLLDLCCFNRGTFIKVGQHLAALEYLVPPEYTKTLSVLHSQAPCTPFTDVVQVIREDLGKEISEVFEEFEKTPLGAASLAQVHRAVLQDGRKVAVKVQHPKVQAQSSRDILIMEVLLHVVKKIFPQFEFMWLIEEAKKNLPLELDFQNEGRNAEKMSSIVSSFSFLRIPRIYWELSTKRVLVMEYMEGGQVNDREYMKRNQIDVNKVSHALGKLYSEMIFVHGFVHCDPHPGNVLVRQNPENCAPEIILLDHGLYQVLTESFRLDYCSLWQALIAADKERIRIYSQRLGAGELYPLFACMLTARSWESVNRGIYENTVSKEEIHEIRSNAATYLPEISQLLASVPRQMLLLLKTNDLLRGIETSLGTHSSSSAFFYMSRCCVRALARHRKEKADSLWSYIHISLSETFCLGQLQMYEIALRLQSCIGRWINHVLLWLYLQ.

In terms of domain architecture, Protein kinase spans 148-455 (EFEKTPLGAA…GTHSSSSAFF (308 aa)). Residues 154-162 (LGAASLAQV) and Lys-176 contribute to the ATP site. The active-site Proton acceptor is Asp-308.

It belongs to the protein kinase superfamily. ADCK protein kinase family.

It is found in the mitochondrion. Appears to be essential for maintaining mitochondrial cristae formation and mitochondrial function by acting via YME1L1 in a kinase-independent manner to regulate essential mitochondrial structural proteins OPA1 and IMMT. The action of this enzyme is not yet clear. It is not known if it has protein kinase activity and what type of substrate it would phosphorylate (Ser, Thr or Tyr). The sequence is that of AarF domain-containing protein kinase 1 (adck1) from Xenopus laevis (African clawed frog).